We begin with the raw amino-acid sequence, 680 residues long: ABC transporter B family member 24, mitochondrial (680 aa).

The N-terminal 75 residues, Met1–Pro75, are a transit peptide targeting the mitochondrion. The region spanning Val108–Gln402 is the ABC transmembrane type-1 domain. 6 helical membrane passes run Ile109 to Phe129, Asn145 to Ala165, Ala232 to Ala252, Phe255 to Leu275, Phe340 to Val360, and Leu376 to Val396. Residues Ile439 to Gln673 form the ABC transporter domain. ATP-binding positions include Tyr448 and Gly472–Arg483.

Belongs to the ABC transporter superfamily. ABCB family. Heavy Metal importer (TC 3.A.1.210) subfamily. As to quaternary structure, homodimer. As to expression, mostly expressed at low levels in roots and flowers.

It is found in the mitochondrion inner membrane. In terms of biological role, performs an essential function in the generation of cytoplasmic iron-sulfur proteins by mediating export of Fe/S cluster precursors synthesized by NFS1 and other mitochondrial proteins. Not involved in the export of cyclic pyranopterin monophosphate (cPMP) from mitochondria to the cytosol. The polypeptide is ABC transporter B family member 24, mitochondrial (ABCB24) (Arabidopsis thaliana (Mouse-ear cress)).